The primary structure comprises 325 residues: Elongation factor P--(R)-beta-lysine ligase (325 aa).

Substrate is bound at residue 76 to 78 (SPE). ATP is bound by residues 100 to 102 (RNE) and Asn-109. Tyr-118 lines the substrate pocket. 244–245 (EL) lines the ATP pocket. Substrate is bound at residue Glu-251. Gly-300 provides a ligand contact to ATP.

This sequence belongs to the class-II aminoacyl-tRNA synthetase family. EpmA subfamily. As to quaternary structure, homodimer.

The enzyme catalyses D-beta-lysine + L-lysyl-[protein] + ATP = N(6)-((3R)-3,6-diaminohexanoyl)-L-lysyl-[protein] + AMP + diphosphate + H(+). With EpmB is involved in the beta-lysylation step of the post-translational modification of translation elongation factor P (EF-P). Catalyzes the ATP-dependent activation of (R)-beta-lysine produced by EpmB, forming a lysyl-adenylate, from which the beta-lysyl moiety is then transferred to the epsilon-amino group of a conserved specific lysine residue in EF-P. In Enterobacter sp. (strain 638), this protein is Elongation factor P--(R)-beta-lysine ligase.